Consider the following 430-residue polypeptide: Histidine--tRNA ligase (430 aa).

Belongs to the class-II aminoacyl-tRNA synthetase family. In terms of assembly, homodimer.

The protein resides in the cytoplasm. It catalyses the reaction tRNA(His) + L-histidine + ATP = L-histidyl-tRNA(His) + AMP + diphosphate + H(+). This Acinetobacter baumannii (strain SDF) protein is Histidine--tRNA ligase.